We begin with the raw amino-acid sequence, 145 residues long: Ponticulin-like protein B (145 aa).

The signal sequence occupies residues methionine 1 to glycine 22. The N-linked (GlcNAc...) asparagine glycan is linked to asparagine 34. Residues aspartate 107 to alanine 126 form a disordered region. Over residues threonine 108–alanine 126 the composition is skewed to low complexity. Residue serine 117 is the site of GPI-like-anchor amidated serine attachment. Positions threonine 118 to isoleucine 145 are cleaved as a propeptide — removed in mature form.

The protein belongs to the ponticulin family. The GPI-like-anchor contains a phosphoceramide group, rather than a phosphatidyl group.

It is found in the cell membrane. Functionally, binds F-actin and nucleates actin assembly. The polypeptide is Ponticulin-like protein B (ponB) (Dictyostelium discoideum (Social amoeba)).